The following is a 133-amino-acid chain: Ribulose bisphosphate carboxylase small subunit (133 aa).

It belongs to the RuBisCO small chain family. As to quaternary structure, heterohexadecamer of 8 large and 8 small subunits.

Its function is as follows. RuBisCO catalyzes two reactions: the carboxylation of D-ribulose 1,5-bisphosphate, the primary event in carbon dioxide fixation, as well as the oxidative fragmentation of the pentose substrate. Both reactions occur simultaneously and in competition at the same active site. Although the small subunit is not catalytic it is essential for maximal activity. The chain is Ribulose bisphosphate carboxylase small subunit from Xanthobacter flavus.